Reading from the N-terminus, the 444-residue chain is Tubulin beta chain (444 aa).

Positions 11, 69, 138, 142, 143, 144, 204, and 226 each coordinate GTP. Position 69 (glutamate 69) interacts with Mg(2+). The disordered stretch occupies residues 423–444 (QQYQDATAEEEGEFDDEEEMDV). The segment covering 429 to 444 (TAEEEGEFDDEEEMDV) has biased composition (acidic residues).

This sequence belongs to the tubulin family. Dimer of alpha and beta chains. A typical microtubule is a hollow water-filled tube with an outer diameter of 25 nm and an inner diameter of 15 nM. Alpha-beta heterodimers associate head-to-tail to form protofilaments running lengthwise along the microtubule wall with the beta-tubulin subunit facing the microtubule plus end conferring a structural polarity. Microtubules usually have 13 protofilaments but different protofilament numbers can be found in some organisms and specialized cells. Mg(2+) serves as cofactor.

It localises to the cytoplasm. Its subcellular location is the cytoskeleton. Tubulin is the major constituent of microtubules, a cylinder consisting of laterally associated linear protofilaments composed of alpha- and beta-tubulin heterodimers. Microtubules grow by the addition of GTP-tubulin dimers to the microtubule end, where a stabilizing cap forms. Below the cap, tubulin dimers are in GDP-bound state, owing to GTPase activity of alpha-tubulin. The protein is Tubulin beta chain of Euplotes focardii.